We begin with the raw amino-acid sequence, 226 residues long: ATP-dependent dethiobiotin synthetase BioD (226 aa).

Residue 14–19 (GIGKTF) participates in ATP binding. Thr18 is a binding site for Mg(2+). Residue Lys39 is part of the active site. Ser43 is a substrate binding site. Residues Asp56, 117 to 120 (EGVG), 177 to 178 (NT), 206 to 208 (PHI), and Asn213 contribute to the ATP site. Mg(2+) is bound by residues Asp56 and Glu117.

The protein belongs to the dethiobiotin synthetase family. In terms of assembly, homodimer. The cofactor is Mg(2+).

Its subcellular location is the cytoplasm. The catalysed reaction is (7R,8S)-7,8-diammoniononanoate + CO2 + ATP = (4R,5S)-dethiobiotin + ADP + phosphate + 3 H(+). It participates in cofactor biosynthesis; biotin biosynthesis; biotin from 7,8-diaminononanoate: step 1/2. Functionally, catalyzes a mechanistically unusual reaction, the ATP-dependent insertion of CO2 between the N7 and N8 nitrogen atoms of 7,8-diaminopelargonic acid (DAPA, also called 7,8-diammoniononanoate) to form a ureido ring. This Xylella fastidiosa (strain 9a5c) protein is ATP-dependent dethiobiotin synthetase BioD.